Reading from the N-terminus, the 310-residue chain is Small ribosomal subunit biogenesis GTPase RsgA (310 aa).

The CP-type G domain occupies 77–238 (LSKQSHILAA…IIDTPGIKGF (162 aa)). GTP-binding positions include 126-129 (NKVD) and 180-188 (GHSGVGKST). Positions 262, 267, 269, and 275 each coordinate Zn(2+).

This sequence belongs to the TRAFAC class YlqF/YawG GTPase family. RsgA subfamily. As to quaternary structure, monomer. Associates with 30S ribosomal subunit, binds 16S rRNA. Zn(2+) serves as cofactor.

The protein localises to the cytoplasm. Its function is as follows. One of several proteins that assist in the late maturation steps of the functional core of the 30S ribosomal subunit. Helps release RbfA from mature subunits. May play a role in the assembly of ribosomal proteins into the subunit. Circularly permuted GTPase that catalyzes slow GTP hydrolysis, GTPase activity is stimulated by the 30S ribosomal subunit. This is Small ribosomal subunit biogenesis GTPase RsgA from Bacteroides fragilis (strain ATCC 25285 / DSM 2151 / CCUG 4856 / JCM 11019 / LMG 10263 / NCTC 9343 / Onslow / VPI 2553 / EN-2).